Reading from the N-terminus, the 303-residue chain is Elongation factor Ts (303 aa).

The involved in Mg(2+) ion dislocation from EF-Tu stretch occupies residues Thr-81 to Val-84.

It belongs to the EF-Ts family.

Its subcellular location is the cytoplasm. Its function is as follows. Associates with the EF-Tu.GDP complex and induces the exchange of GDP to GTP. It remains bound to the aminoacyl-tRNA.EF-Tu.GTP complex up to the GTP hydrolysis stage on the ribosome. The protein is Elongation factor Ts of Mesomycoplasma hyopneumoniae (strain J / ATCC 25934 / NCTC 10110) (Mycoplasma hyopneumoniae).